A 1460-amino-acid chain; its full sequence is Probable outer membrane protein PmpC (1460 aa).

A signal peptide spans 1–20; that stretch reads MKFLSATAVFAAALPSITSA. Disordered regions lie at residues 21 to 48, 92 to 212, 279 to 372, 455 to 549, and 993 to 1021; these read SSVE…FTEI, SEEN…PDKD, TPPA…ESGS, TPEE…DSSI, and VDTS…TAQA. The span at 34 to 44 shows a compositional bias: low complexity; the sequence is SSRTGSSSSQS. A compositionally biased stretch (polar residues) spans 97-114; it reads QASFQDSAQNQTENASEG. Positions 115–137 are enriched in low complexity; sequence NSPNSENTNQSSTTETESITTDE. The segment covering 138–155 has biased composition (polar residues); sequence QVQNDNESAASVPTTVET. Residues 290 to 327 are compositionally biased toward low complexity; that stretch reads NDPSGSNGNDGSDDSNSSGNTDSNESNPNNSASNNTGS. Polar residues predominate over residues 328–358; it reads ENELSSSTPSAQLPNPATPFLSSVSTNSQPI. Residues 461–471 are compositionally biased toward low complexity; that stretch reads LKSSQLNNQNP. Residues 487-501 show a composition bias toward polar residues; sequence SLETSPITNQDSASS. Low complexity-rich tracts occupy residues 504–548 and 995–1018; these read AIFR…SDSS and TSTN…STPT. Residues 1167 to 1460 form the Autotransporter domain; that stretch reads DEVAYNNLWI…MINCGARMTF (294 aa).

The protein belongs to the PMP outer membrane protein family.

The protein localises to the secreted. The protein resides in the cell wall. It is found in the cell outer membrane. The sequence is that of Probable outer membrane protein PmpC (pmpC) from Chlamydia muridarum (strain MoPn / Nigg).